A 207-amino-acid polypeptide reads, in one-letter code: Small ribosomal subunit protein eS1 (207 aa).

It belongs to the eukaryotic ribosomal protein eS1 family.

The chain is Small ribosomal subunit protein eS1 from Methanosarcina barkeri (strain Fusaro / DSM 804).